The following is a 479-amino-acid chain: Poly(A) polymerase catalytic subunit (479 aa).

Catalysis depends on residues Asp-202 and Asp-204. Asp-202, Asp-204, and Asp-253 together coordinate Ca(2+).

This sequence belongs to the poxviridae poly(A) polymerase catalytic subunit family. Heterodimer of a large (catalytic) subunit and a small (regulatory) subunit.

It carries out the reaction RNA(n) + ATP = RNA(n)-3'-adenine ribonucleotide + diphosphate. Functionally, polymerase that creates the 3'-poly(A) tail of mRNA's. The protein is Poly(A) polymerase catalytic subunit (OPG063) of Cynomys gunnisoni (Gunnison's prairie dog).